The primary structure comprises 187 residues: Ribosome-recycling factor (187 aa).

It belongs to the RRF family.

Its subcellular location is the cytoplasm. Its function is as follows. Responsible for the release of ribosomes from messenger RNA at the termination of protein biosynthesis. May increase the efficiency of translation by recycling ribosomes from one round of translation to another. The protein is Ribosome-recycling factor of Ruegeria pomeroyi (strain ATCC 700808 / DSM 15171 / DSS-3) (Silicibacter pomeroyi).